The sequence spans 192 residues: Pyridoxal 5'-phosphate synthase subunit PdxT (192 aa).

50 to 52 (GES) contacts L-glutamine. C82 acts as the Nucleophile in catalysis. L-glutamine is bound by residues R109 and 136–137 (IR). Residues H172 and E174 each act as charge relay system in the active site.

The protein belongs to the glutaminase PdxT/SNO family. As to quaternary structure, in the presence of PdxS, forms a dodecamer of heterodimers. Only shows activity in the heterodimer.

The catalysed reaction is aldehydo-D-ribose 5-phosphate + D-glyceraldehyde 3-phosphate + L-glutamine = pyridoxal 5'-phosphate + L-glutamate + phosphate + 3 H2O + H(+). It catalyses the reaction L-glutamine + H2O = L-glutamate + NH4(+). It participates in cofactor biosynthesis; pyridoxal 5'-phosphate biosynthesis. Catalyzes the hydrolysis of glutamine to glutamate and ammonia as part of the biosynthesis of pyridoxal 5'-phosphate. The resulting ammonia molecule is channeled to the active site of PdxS. The polypeptide is Pyridoxal 5'-phosphate synthase subunit PdxT (Haemophilus influenzae (strain PittGG)).